Consider the following 276-residue polypeptide: Rhamnulose-1-phosphate aldolase (276 aa).

Residue Glu-117 is part of the active site. Zn(2+)-binding residues include His-141, His-143, and His-212.

The protein belongs to the aldolase class II family. RhaD subfamily. Homotetramer. Zn(2+) is required as a cofactor.

The protein localises to the cytoplasm. The catalysed reaction is L-rhamnulose 1-phosphate = (S)-lactaldehyde + dihydroxyacetone phosphate. Its pathway is carbohydrate degradation; L-rhamnose degradation; glycerone phosphate from L-rhamnose: step 3/3. Its function is as follows. Catalyzes the reversible cleavage of L-rhamnulose-1-phosphate to dihydroxyacetone phosphate (DHAP) and L-lactaldehyde. The chain is Rhamnulose-1-phosphate aldolase from Klebsiella pneumoniae (strain 342).